Reading from the N-terminus, the 207-residue chain is FMN-dependent NADH:quinone oxidoreductase 1 (207 aa).

Residues Ser9, 15-17, and 139-142 contribute to the FMN site; these read SIS and TRGG.

Belongs to the azoreductase type 1 family. As to quaternary structure, homodimer. FMN is required as a cofactor.

It carries out the reaction 2 a quinone + NADH + H(+) = 2 a 1,4-benzosemiquinone + NAD(+). The catalysed reaction is N,N-dimethyl-1,4-phenylenediamine + anthranilate + 2 NAD(+) = 2-(4-dimethylaminophenyl)diazenylbenzoate + 2 NADH + 2 H(+). Functionally, quinone reductase that provides resistance to thiol-specific stress caused by electrophilic quinones. In terms of biological role, also exhibits azoreductase activity. Catalyzes the reductive cleavage of the azo bond in aromatic azo compounds to the corresponding amines. The chain is FMN-dependent NADH:quinone oxidoreductase 1 from Trichormus variabilis (strain ATCC 29413 / PCC 7937) (Anabaena variabilis).